A 234-amino-acid polypeptide reads, in one-letter code: Probable septum site-determining protein MinC (234 aa).

It belongs to the MinC family. Interacts with MinD and FtsZ.

In terms of biological role, cell division inhibitor that blocks the formation of polar Z ring septums. Rapidly oscillates between the poles of the cell to destabilize FtsZ filaments that have formed before they mature into polar Z rings. Prevents FtsZ polymerization. In Pseudoalteromonas translucida (strain TAC 125), this protein is Probable septum site-determining protein MinC.